Reading from the N-terminus, the 490-residue chain is Bifunctional protein HldE (490 aa).

Residues M1–A330 are ribokinase. An ATP-binding site is contributed by N205 to E208. Residue D275 is part of the active site. Residues F358–A490 form a cytidylyltransferase region.

This sequence in the N-terminal section; belongs to the carbohydrate kinase PfkB family. In the C-terminal section; belongs to the cytidylyltransferase family. Homodimer.

The enzyme catalyses D-glycero-beta-D-manno-heptose 7-phosphate + ATP = D-glycero-beta-D-manno-heptose 1,7-bisphosphate + ADP + H(+). The catalysed reaction is D-glycero-beta-D-manno-heptose 1-phosphate + ATP + H(+) = ADP-D-glycero-beta-D-manno-heptose + diphosphate. It functions in the pathway nucleotide-sugar biosynthesis; ADP-L-glycero-beta-D-manno-heptose biosynthesis; ADP-L-glycero-beta-D-manno-heptose from D-glycero-beta-D-manno-heptose 7-phosphate: step 1/4. Its pathway is nucleotide-sugar biosynthesis; ADP-L-glycero-beta-D-manno-heptose biosynthesis; ADP-L-glycero-beta-D-manno-heptose from D-glycero-beta-D-manno-heptose 7-phosphate: step 3/4. Functionally, catalyzes the phosphorylation of D-glycero-D-manno-heptose 7-phosphate at the C-1 position to selectively form D-glycero-beta-D-manno-heptose-1,7-bisphosphate. Its function is as follows. Catalyzes the ADP transfer from ATP to D-glycero-beta-D-manno-heptose 1-phosphate, yielding ADP-D-glycero-beta-D-manno-heptose. The sequence is that of Bifunctional protein HldE from Rhodopseudomonas palustris (strain BisB18).